The chain runs to 864 residues: Arf-GAP with GTPase, ANK repeat and PH domain-containing protein 1 (864 aa).

The small GTPase-like stretch occupies residues 66–276 (SRSVPELKVG…QTSNGGGSLS (211 aa)). The 175-residue stretch at 67-241 (RSVPELKVGI…TRKKQQLSIG (175 aa)) folds into the GLD domain. GTP-binding positions include 78-85 (GNLASGKS), 122-126 (IRDEG), and 178-181 (TQDA). Disordered stretches follow at residues 266–343 (SQTS…IGSG), 405–455 (VPGK…QMAS), and 499–549 (TGLG…LSST). The segment covering 275-289 (LSDYSSSVPSTPSTS) has biased composition (low complexity). A compositionally biased stretch (basic and acidic residues) spans 322 to 337 (KGSDPDKDKKGLESRA). The PH domain maps to 346 to 591 (IPIKQGMLLK…WVQAIESQIL (246 aa)). Positions 413–428 (ATSSCAPVASPKTNGL) are enriched in polar residues. Low complexity predominate over residues 507-517 (SSPSISSTTSP). Basic residues predominate over residues 527–537 (ANRKKHRRKKS). Polar residues predominate over residues 538 to 549 (TSNFKVDGLSST). The Arf-GAP domain occupies 612–732 (ALALQSIRNL…LFLSPLPCRD (121 aa)). The segment at 627-650 (CVDCDAQSPDWASLNLGALMCIEC) adopts a C4-type zinc-finger fold. ANK repeat units lie at residues 771–800 (DRRT…DVMA) and 804–833 (HGNT…PDEQ). The span at 845–854 (KNNRNNNSNA) shows a compositional bias: low complexity. The tract at residues 845–864 (KNNRNNNSNAGGSGLMPTLI) is disordered.

Belongs to the centaurin gamma-like family. In terms of assembly, homodimer. Interacts with several subunits of the AP-3 protein complex.

The protein localises to the cytoplasm. Its function is as follows. GTPase-activating protein. Directly and specifically regulates the adapter protein 3 (AP-3)-dependent trafficking of proteins in the endosomal-lysosomal system. The protein is Arf-GAP with GTPase, ANK repeat and PH domain-containing protein 1 (agap1) of Xenopus laevis (African clawed frog).